The sequence spans 72 residues: uncharacterized protein (72 aa).

Positions 27 to 55 form a coiled coil; the sequence is YTQNLINELQEARDSINDLQRAHERLKLV.

This is an uncharacterized protein from Schizosaccharomyces pombe (strain 972 / ATCC 24843) (Fission yeast).